We begin with the raw amino-acid sequence, 394 residues long: Phosphopentomutase (394 aa).

6 residues coordinate Mn(2+): aspartate 15, aspartate 288, histidine 293, aspartate 329, histidine 330, and histidine 341.

Belongs to the phosphopentomutase family. Mn(2+) is required as a cofactor.

It localises to the cytoplasm. The catalysed reaction is 2-deoxy-alpha-D-ribose 1-phosphate = 2-deoxy-D-ribose 5-phosphate. It catalyses the reaction alpha-D-ribose 1-phosphate = D-ribose 5-phosphate. It functions in the pathway carbohydrate degradation; 2-deoxy-D-ribose 1-phosphate degradation; D-glyceraldehyde 3-phosphate and acetaldehyde from 2-deoxy-alpha-D-ribose 1-phosphate: step 1/2. Functionally, isomerase that catalyzes the conversion of deoxy-ribose 1-phosphate (dRib-1-P) and ribose 1-phosphate (Rib-1-P) to deoxy-ribose 5-phosphate (dRib-5-P) and ribose 5-phosphate (Rib-5-P), respectively. This Bacillus pumilus (strain SAFR-032) protein is Phosphopentomutase.